The primary structure comprises 285 residues: Large ribosomal subunit protein uL1m (285 aa).

A mitochondrion-targeting transit peptide spans 1-19 (MLSVVAIPKICVTGPARRC).

Belongs to the universal ribosomal protein uL1 family. Component of the mitochondrial large ribosomal subunit (mt-LSU). Mature yeast 74S mitochondrial ribosomes consist of a small (37S) and a large (54S) subunit. The 37S small subunit contains a 15S ribosomal RNA (15S mt-rRNA) and 34 different proteins. The 54S large subunit contains a 21S rRNA (21S mt-rRNA) and 46 different proteins.

The protein resides in the mitochondrion. Component of the mitochondrial ribosome (mitoribosome), a dedicated translation machinery responsible for the synthesis of mitochondrial genome-encoded proteins, including at least some of the essential transmembrane subunits of the mitochondrial respiratory chain. The mitoribosomes are attached to the mitochondrial inner membrane and translation products are cotranslationally integrated into the membrane. In Saccharomyces cerevisiae (strain ATCC 204508 / S288c) (Baker's yeast), this protein is Large ribosomal subunit protein uL1m (MRPL1).